A 311-amino-acid polypeptide reads, in one-letter code: GTPase Era (311 aa).

Positions 16–188 constitute an Era-type G domain; that stretch reads HAGFVAIVGK…REQLLEVLPE (173 aa). Residues 24-31 are G1; it reads GKPNVGKS. Residue 24-31 participates in GTP binding; the sequence is GKPNVGKS. Positions 50–54 are G2; the sequence is QTTRR. Residues 71 to 74 form a G3 region; sequence DTPG. GTP contacts are provided by residues 71-75 and 133-136; these read DTPGL and NKTD. The tract at residues 133-136 is G4; it reads NKTD. The interval 166–168 is G5; that stretch reads LSA. A KH type-2 domain is found at 219 to 296; that stretch reads LRDELPYAVA…YLGLEVIVIP (78 aa).

This sequence belongs to the TRAFAC class TrmE-Era-EngA-EngB-Septin-like GTPase superfamily. Era GTPase family. In terms of assembly, monomer.

Its subcellular location is the cytoplasm. It localises to the cell membrane. Its function is as follows. An essential GTPase that binds both GDP and GTP, with rapid nucleotide exchange. Plays a role in 16S rRNA processing and 30S ribosomal subunit biogenesis and possibly also in cell cycle regulation and energy metabolism. The chain is GTPase Era from Deinococcus radiodurans (strain ATCC 13939 / DSM 20539 / JCM 16871 / CCUG 27074 / LMG 4051 / NBRC 15346 / NCIMB 9279 / VKM B-1422 / R1).